The sequence spans 403 residues: Adenylate cyclase (403 aa).

Residues 1 to 16 show a composition bias toward polar residues; the sequence is MSTEHTNTPRADSPQS. Residues 1 to 37 are disordered; it reads MSTEHTNTPRADSPQSAAEAVRGARQHAPAATPAESD. The segment at 31–60 is pyruvate binding; sequence ATPAESDPILELAEAMEGPLRIPAHTPEAV. The Guanylate cyclase domain maps to 238-347; that stretch reads AVGFADLVSY…PTVNMAARLT (110 aa). Mg(2+) is bound by residues Asp243 and Asp287.

This sequence belongs to the adenylyl cyclase class-3 family. As to quaternary structure, homodimer. Mg(2+) is required as a cofactor.

It localises to the cytoplasm. It carries out the reaction ATP = 3',5'-cyclic AMP + diphosphate. Pyruvate-stimulated. Plays essential roles in regulation of cellular metabolism by catalyzing the synthesis of a second messenger, cAMP. The protein is Adenylate cyclase (cya) of Glutamicibacter nicotianae (Arthrobacter nicotianae).